A 466-amino-acid chain; its full sequence is Uronate isomerase (466 aa).

The protein belongs to the metallo-dependent hydrolases superfamily. Uronate isomerase family.

The enzyme catalyses D-glucuronate = D-fructuronate. It carries out the reaction aldehydo-D-galacturonate = keto-D-tagaturonate. The protein operates within carbohydrate metabolism; pentose and glucuronate interconversion. The protein is Uronate isomerase of Rhizorhabdus wittichii (strain DSM 6014 / CCUG 31198 / JCM 15750 / NBRC 105917 / EY 4224 / RW1) (Sphingomonas wittichii).